Reading from the N-terminus, the 293-residue chain is Nucleotide-binding protein BC_5156 (293 aa).

An ATP-binding site is contributed by 14–21 (GMSGAGKT). 65-68 (DLRG) serves as a coordination point for GTP.

Belongs to the RapZ-like family.

Functionally, displays ATPase and GTPase activities. The polypeptide is Nucleotide-binding protein BC_5156 (Bacillus cereus (strain ATCC 14579 / DSM 31 / CCUG 7414 / JCM 2152 / NBRC 15305 / NCIMB 9373 / NCTC 2599 / NRRL B-3711)).